A 306-amino-acid polypeptide reads, in one-letter code: Ornithine carbamoyltransferase (306 aa).

Carbamoyl phosphate-binding positions include 53-56, Q80, R104, and 131-134; these read STRT and HPCQ. Residues N162, D219, and 223 to 224 each bind L-ornithine; that span reads SM. Carbamoyl phosphate-binding positions include 259–260 and R287; that span reads CL.

Belongs to the aspartate/ornithine carbamoyltransferase superfamily. OTCase family.

The protein localises to the cytoplasm. The catalysed reaction is carbamoyl phosphate + L-ornithine = L-citrulline + phosphate + H(+). It functions in the pathway amino-acid biosynthesis; L-arginine biosynthesis; L-arginine from L-ornithine and carbamoyl phosphate: step 1/3. Its function is as follows. Reversibly catalyzes the transfer of the carbamoyl group from carbamoyl phosphate (CP) to the N(epsilon) atom of ornithine (ORN) to produce L-citrulline. In Acinetobacter baumannii (strain ATCC 17978 / DSM 105126 / CIP 53.77 / LMG 1025 / NCDC KC755 / 5377), this protein is Ornithine carbamoyltransferase.